Consider the following 348-residue polypeptide: Phosphate acyltransferase (348 aa).

The protein belongs to the PlsX family. In terms of assembly, homodimer. Probably interacts with PlsY.

The protein localises to the cytoplasm. The enzyme catalyses a fatty acyl-[ACP] + phosphate = an acyl phosphate + holo-[ACP]. It functions in the pathway lipid metabolism; phospholipid metabolism. In terms of biological role, catalyzes the reversible formation of acyl-phosphate (acyl-PO(4)) from acyl-[acyl-carrier-protein] (acyl-ACP). This enzyme utilizes acyl-ACP as fatty acyl donor, but not acyl-CoA. The polypeptide is Phosphate acyltransferase (Oenococcus oeni (strain ATCC BAA-331 / PSU-1)).